The following is a 585-amino-acid chain: Glutamine--tRNA ligase (585 aa).

The 'HIGH' region motif lies at 51–61 (PEPNGYLHIGH). ATP is bound by residues 52 to 54 (EPN) and 58 to 64 (HIGHAKS). The L-glutamine site is built by aspartate 84 and tyrosine 238. ATP is bound by residues threonine 257 and 292 to 293 (RL). Positions 299–303 (ITSKR) match the 'KMSKS' region motif.

The protein belongs to the class-I aminoacyl-tRNA synthetase family. Monomer.

It localises to the cytoplasm. The enzyme catalyses tRNA(Gln) + L-glutamine + ATP = L-glutaminyl-tRNA(Gln) + AMP + diphosphate. The polypeptide is Glutamine--tRNA ligase (Cupriavidus taiwanensis (strain DSM 17343 / BCRC 17206 / CCUG 44338 / CIP 107171 / LMG 19424 / R1) (Ralstonia taiwanensis (strain LMG 19424))).